The sequence spans 793 residues: MMAALYPSTDLSGVSSSSLPSSPSSSSPNEVMALKDVREVKEENTLNEKLFLLACDKGDYYMVKKILEENSSGDLNINCVDVLGRNAVTITIENESLDILQLLLDYGCQSADALLVAIDSEVVGAVDILLNHRPKRSSRPTIVKLMERIQNPEYSTTMDVAPVILAAHRNNYEILTMLLKQDVSLPKPHAVGCECTLCSAKNKKDSLRHSRFRLDIYRCLASPALIMLTEEDPILRAFELSADLKELSLVEVEFRNDYEELARQCKMFAKDLLAQARNSRELEVILNHTSSDEPLDKRGLLEERMNLSRLKLAIKYNQKEFVSQSNCQQFLNTVWFGQMSGYRRKPTCKKIMTVLTVGIFWPVLSLCYLIAPKSQFGRIIHTPFMKFIIHGASYFTFLLLLNLYSLVYNEDKKNTMGPALERIDYLLILWIIGMIWSDIKRLWYEGLEDFLEESRNQLSFVMNSLYLATFALKVVAHNKFHDFADRKDWDAFHPTLVAEGLFAFANVLSYLRLFFMYTTSSILGPLQISMGQMLQDFGKFLGMFLLVLFSFTIGLTQLYDKGYTSKEQKDCVGIFCEQQSNDTFHSFIGTCFALFWYIFSLAHVAIFVTRFSYGEELQSFVGAVIVGTYNVVVVIVLTKLLVAMLHKSFQLIANHEDKEWKFARAKLWLSYFDDKCTLPPPFNIIPSPKTICYMISSLSKWICSHTSKGKVKRQNSLKEWRNLKQKRDENYQKVMCCLVHRYLTSMRQKMQSTDQATVENLNELRQDLSKFRNEIRDLLGFRTSKYAMFYPRN.

Residues 1-30 are disordered; the sequence is MMAALYPSTDLSGVSSSSLPSSPSSSSPNE. Over 1–345 the chain is Cytoplasmic; it reads MMAALYPSTD…FGQMSGYRRK (345 aa). Over residues 15–28 the composition is skewed to low complexity; the sequence is SSSSLPSSPSSSSP. 4 ANK repeats span residues 46 to 75, 83 to 109, 111 to 156, and 158 to 180; these read LNEKLFLLACDKGDYYMVKKILEENSSGDL, LGRNAVTITIENESLDILQLLLDYGCQ, ADAL…EYST, and MDVAPVILAAHRNNYEILTMLLK. Zn(2+) is bound by residues His189, Cys193, Cys195, and Cys198. The segment at residues 346 to 379 is an intramembrane region (discontinuously helical); that stretch reads PTCKKIMTVLTVGIFWPVLSLCYLIAPKSQFGRI. Residues 380–386 lie on the Cytoplasmic side of the membrane; that stretch reads IHTPFMK. The chain crosses the membrane as a helical span at residues 387 to 404; sequence FIIHGASYFTFLLLLNLY. The Extracellular segment spans residues 405–422; sequence SLVYNEDKKNTMGPALER. A helical membrane pass occupies residues 423 to 439; sequence IDYLLILWIIGMIWSDI. The Cytoplasmic portion of the chain corresponds to 440–455; that stretch reads KRLWYEGLEDFLEESR. A helical membrane pass occupies residues 456–475; it reads NQLSFVMNSLYLATFALKVV. Residues 476-496 are Extracellular-facing; sequence AHNKFHDFADRKDWDAFHPTL. A helical transmembrane segment spans residues 497–517; sequence VAEGLFAFANVLSYLRLFFMY. Over 518-536 the chain is Cytoplasmic; that stretch reads TTSSILGPLQISMGQMLQD. The helical transmembrane segment at 537 to 558 threads the bilayer; it reads FGKFLGMFLLVLFSFTIGLTQL. The Extracellular segment spans residues 559 to 623; it reads YDKGYTSKEQ…GEELQSFVGA (65 aa). An intrachain disulfide couples Cys571 to Cys576. Residues 624–644 form a helical membrane-spanning segment; the sequence is VIVGTYNVVVVIVLTKLLVAM. The Cytoplasmic portion of the chain corresponds to 645–793; that stretch reads LHKSFQLIAN…SKYAMFYPRN (149 aa).

This sequence belongs to the transient receptor (TC 1.A.4) family. STrpC subfamily. TRPC1 sub-subfamily. In terms of assembly, heterotetramer with TRPC4 and/or TRPC5. Forms a heteromeric ion channel with TRPC4, with a 1:3 TRPC1:TRPC4 stoichiometry. Unlike other TRP channel proteins, does not form a homomeric channel. Interacts with TRPC4AP. Interacts with ITPR3. Interacts with MX1 and RNF24. Interacts with FKBP4. Interacts with PLSCR1. Interacts with PKD2L2. Forms a heterotetramer with PKD2 with a 2:2 stoichiometry; has distinct channel properties separate from PKD2 or TRPC1 homomers alone. Activation of PRKCA induces phosphorylation of TRPC1 and subsequent Ca2+ entry into cells.

The protein localises to the cell membrane. It carries out the reaction Ca(2+)(in) = Ca(2+)(out). The catalysed reaction is Na(+)(in) = Na(+)(out). The enzyme catalyses Li(+)(in) = Li(+)(out). It catalyses the reaction Cs(+)(in) = Cs(+)(out). May be operated by a phosphatidylinositol second messenger system activated by receptor tyrosine kinases or G-protein coupled receptors. Also activated by intracellular calcium store depletion. Functionally, forms a receptor-activated non-selective calcium permeant cation channel. Forms a heteromeric ion channel with TRPC4 or TRPC5 that has reduced calcium permeability compared to the homomeric TRPC4 or TRPC5 channel. Also permeable to monovalent ions including sodium, lithium and cesium ions. The polypeptide is Short transient receptor potential channel 1 (Trpc1) (Mus musculus (Mouse)).